We begin with the raw amino-acid sequence, 213 residues long: Peroxynitrite isomerase (213 aa).

Low complexity predominate over residues 1 to 10 (MGADATGDTA). Positions 1–26 (MGADATGDTAARGDRAAHGDTASGGA) are disordered. A GXWXGXG motif is present at residues 51 to 57 (GTWRGEG). H203 is a heme b binding site.

This sequence belongs to the nitrobindin family. In terms of assembly, homodimer. Requires heme b as cofactor.

It catalyses the reaction peroxynitrite = nitrate. Its pathway is nitrogen metabolism. In terms of biological role, heme-binding protein able to scavenge peroxynitrite and to protect free L-tyrosine against peroxynitrite-mediated nitration, by acting as a peroxynitrite isomerase that converts peroxynitrite to nitrate. Therefore, this protein likely plays a role in peroxynitrite sensing and in the detoxification of reactive nitrogen and oxygen species (RNS and ROS, respectively). Is able to bind nitric oxide (NO) in vitro, but may act as a sensor of peroxynitrite levels in vivo. The sequence is that of Peroxynitrite isomerase from Parafrankia sp. (strain EAN1pec).